Here is a 448-residue protein sequence, read N- to C-terminus: Tryptamine benzoyltransferase 2 (448 aa).

The segment at 1-20 (MEITSSAMLKPAPTPTPHPL) is disordered. Residues H155 and D386 each act as proton acceptor in the active site.

It belongs to the plant acyltransferase family.

In terms of biological role, hydroxycinnamoyl transferase that catalyzes the transfer of an acyl from benzoyl-CoA to tryptamine, to produce benzoyl tryptamine. Serotonin and tyramine serve as acyl acceptors in vitro. Specific for benzoyl-CoA as acyl donor. Has no activity with p-coumaroyl-CoA, caffeoyl-CoA, or feruloyl-CoA as acyl donors. This chain is Tryptamine benzoyltransferase 2, found in Oryza sativa subsp. japonica (Rice).